Consider the following 199-residue polypeptide: ATP-dependent Clp protease proteolytic subunit 2 (199 aa).

The active-site Nucleophile is serine 98. Histidine 123 is a catalytic residue.

The protein belongs to the peptidase S14 family. As to quaternary structure, fourteen ClpP subunits assemble into 2 heptameric rings which stack back to back to give a disk-like structure with a central cavity, resembling the structure of eukaryotic proteasomes.

The protein resides in the cytoplasm. The enzyme catalyses Hydrolysis of proteins to small peptides in the presence of ATP and magnesium. alpha-casein is the usual test substrate. In the absence of ATP, only oligopeptides shorter than five residues are hydrolyzed (such as succinyl-Leu-Tyr-|-NHMec, and Leu-Tyr-Leu-|-Tyr-Trp, in which cleavage of the -Tyr-|-Leu- and -Tyr-|-Trp bonds also occurs).. Its function is as follows. Cleaves peptides in various proteins in a process that requires ATP hydrolysis. Has a chymotrypsin-like activity. Plays a major role in the degradation of misfolded proteins. This is ATP-dependent Clp protease proteolytic subunit 2 from Corynebacterium diphtheriae (strain ATCC 700971 / NCTC 13129 / Biotype gravis).